Consider the following 27-residue polypeptide: Nemertide alpha-8 (27 aa).

Intrachain disulfides connect cysteine 2/cysteine 16, cysteine 9/cysteine 20, and cysteine 15/cysteine 26.

Belongs to the nemertide family. As to expression, confined to the epidermis and to the mucus layer.

The protein resides in the secreted. In terms of biological role, highly potent toxin against both insect and some mammalian sodium channels (Nav). It potently inhibits inactivation of insect sodium channels of B.germanica (BgNav1) and also delays the inactivation of mammalian Nav with potent activity on Nav1.3/SCN3A and Nav1.4/SCN4A. 1 uM is enough to completely inhibits the inactivation, resulting in sustained non-inactivating currents. In addition, the toxin significantly enhances the recovery from inactivation, and the open state is not required for the toxin to interact with the channel. In vivo, injection into brine shrimp (Artemia salina) stops movement or causes death after 24 hours (EC(50)=0.4 uM). This Riseriellus occultus (Ribbon worm) protein is Nemertide alpha-8.